A 388-amino-acid polypeptide reads, in one-letter code: GTPase Obg (388 aa).

Positions 1-159 (MKFVDEATIR…RSLRLELMLL (159 aa)) constitute an Obg domain. Positions 160-333 (ADVGLLGMPN…LALKLLDFID (174 aa)) constitute an OBG-type G domain. GTP-binding positions include 166 to 173 (GMPNAGKS), 191 to 195 (FTTLV), 213 to 216 (DIPG), 283 to 286 (NKAD), and 314 to 316 (SAY). Mg(2+)-binding residues include serine 173 and threonine 193. The segment at 356–377 (QNANESVNEDYDDDLDDDDYDD) is disordered. Residues 362 to 377 (VNEDYDDDLDDDDYDD) show a composition bias toward acidic residues.

It belongs to the TRAFAC class OBG-HflX-like GTPase superfamily. OBG GTPase family. As to quaternary structure, monomer. The cofactor is Mg(2+).

It localises to the cytoplasm. An essential GTPase which binds GTP, GDP and possibly (p)ppGpp with moderate affinity, with high nucleotide exchange rates and a fairly low GTP hydrolysis rate. Plays a role in control of the cell cycle, stress response, ribosome biogenesis and in those bacteria that undergo differentiation, in morphogenesis control. The sequence is that of GTPase Obg from Shewanella piezotolerans (strain WP3 / JCM 13877).